Reading from the N-terminus, the 263-residue chain is Small ribosomal subunit protein eS4, Y isoform 1 (263 aa).

In terms of domain architecture, S4 RNA-binding spans 42–104 (LPLIIFLRNR…TGEHFRLVYD (63 aa)).

This sequence belongs to the eukaryotic ribosomal protein eS4 family.

In Macaca fuscata fuscata (Japanese macaque), this protein is Small ribosomal subunit protein eS4, Y isoform 1 (RPS4Y1).